The sequence spans 623 residues: V-type proton ATPase catalytic subunit A (623 aa).

252–259 (GAFGCGKT) contacts ATP.

The protein belongs to the ATPase alpha/beta chains family. V-ATPase is a heteromultimeric enzyme composed of a peripheral catalytic V1 complex (main components: subunits A, B, C, D, E, and F) attached to an integral membrane V0 proton pore complex (main component: the proteolipid protein).

The catalysed reaction is ATP + H2O + 4 H(+)(in) = ADP + phosphate + 5 H(+)(out). Functionally, catalytic subunit of the peripheral V1 complex of vacuolar ATPase. V-ATPase vacuolar ATPase is responsible for acidifying a variety of intracellular compartments in eukaryotic cells. The protein is V-type proton ATPase catalytic subunit A of Vigna radiata var. radiata (Mung bean).